We begin with the raw amino-acid sequence, 96 residues long: NADH-ubiquinone oxidoreductase chain 4L (96 aa).

A run of 3 helical transmembrane segments spans residues 2–22, 28–48, and 62–82; these read IMIL…FCFV, LLSM…MLFI, and MFLT…VSMI.

Belongs to the complex I subunit 4L family.

Its subcellular location is the mitochondrion membrane. It catalyses the reaction a ubiquinone + NADH + 5 H(+)(in) = a ubiquinol + NAD(+) + 4 H(+)(out). Core subunit of the mitochondrial membrane respiratory chain NADH dehydrogenase (Complex I) that is believed to belong to the minimal assembly required for catalysis. Complex I functions in the transfer of electrons from NADH to the respiratory chain. The immediate electron acceptor for the enzyme is believed to be ubiquinone. The polypeptide is NADH-ubiquinone oxidoreductase chain 4L (mt:ND4L) (Drosophila melanogaster (Fruit fly)).